A 464-amino-acid chain; its full sequence is Cysteine--tRNA ligase (464 aa).

Position 28 (Cys-28) interacts with Zn(2+). The short motif at 30–40 (PTVYDTAHIGN) is the 'HIGH' region element. Positions 212, 237, and 241 each coordinate Zn(2+). Residues 270–274 (KMSKS) carry the 'KMSKS' region motif. Position 273 (Lys-273) interacts with ATP.

Belongs to the class-I aminoacyl-tRNA synthetase family. In terms of assembly, monomer. The cofactor is Zn(2+).

The protein resides in the cytoplasm. The enzyme catalyses tRNA(Cys) + L-cysteine + ATP = L-cysteinyl-tRNA(Cys) + AMP + diphosphate. This is Cysteine--tRNA ligase from Wolbachia pipientis subsp. Culex pipiens (strain wPip).